The primary structure comprises 74 residues: Cell division protein ZapB (74 aa).

A coiled-coil region spans residues 2-74; that stretch reads TLDLLEQLES…LVGKIEETES (73 aa).

The protein belongs to the ZapB family. As to quaternary structure, homodimer. The ends of the coiled-coil dimer bind to each other, forming polymers. Interacts with FtsZ.

Its subcellular location is the cytoplasm. In terms of biological role, non-essential, abundant cell division factor that is required for proper Z-ring formation. It is recruited early to the divisome by direct interaction with FtsZ, stimulating Z-ring assembly and thereby promoting cell division earlier in the cell cycle. Its recruitment to the Z-ring requires functional FtsA or ZipA. The sequence is that of Cell division protein ZapB from Psychromonas ingrahamii (strain DSM 17664 / CCUG 51855 / 37).